A 531-amino-acid chain; its full sequence is MVKAVTSSKETAKVEKKKSAPRSGVKKAVSKSQAGVKDSSSPVHKSSKKAPLAEAAVGVIKQVIGAVVDVQFEGPLPNILNALETDNLGNRLVLEVAQHLGENTVRTIAMDTTDGLVRGQKVFDTGTQISVPVGEATLGRIMNVIGEPVDNVGPIATSKTRSIHQEAPEYVEQSTASEILVTGIKVVDLLAPYSKGGKVGLFGGAGVGKTVLIMELINNIAKAHGGYSVFAGVGERTREGNDLYYEMIESRVNVNPKDNNGSTEGSKCALVYGQMNEPPGARARVALSGLTIAESFRDEGQDVLFFVDNIFRFTQAGAEVSALLGRIPSAVGYQPTLATDMGALQERITSTRTGSITSVQAIYVPADDLTDPAPATSFAHLDATTVLSRSIAEKGIYPAVDPLDSFSRMLDPLIVGEEHYTVACQVQTILQRYRSLQDIIAILGMDELSEDDKLLVGRARKIERFLSQPFHVAEAFTGSPGKLVPLEETIKGFKGLCAGEYDNLPEAAFYMVGSIDEAVEKGKRLIAEVSS.

Residues 1-48 (MVKAVTSSKETAKVEKKKSAPRSGVKKAVSKSQAGVKDSSSPVHKSSK) are disordered. Over residues 19 to 29 (SAPRSGVKKAV) the composition is skewed to basic residues. The segment covering 30-44 (SKSQAGVKDSSSPVH) has biased composition (polar residues). 203 to 210 (GGAGVGKT) provides a ligand contact to ATP.

The protein belongs to the ATPase alpha/beta chains family. In terms of assembly, F-type ATPases have 2 components, CF(1) - the catalytic core - and CF(0) - the membrane proton channel. CF(1) has five subunits: alpha(3), beta(3), gamma(1), delta(1), epsilon(1). CF(0) has three main subunits: a(1), b(2) and c(9-12). The alpha and beta chains form an alternating ring which encloses part of the gamma chain. CF(1) is attached to CF(0) by a central stalk formed by the gamma and epsilon chains, while a peripheral stalk is formed by the delta and b chains.

The protein localises to the cell inner membrane. It carries out the reaction ATP + H2O + 4 H(+)(in) = ADP + phosphate + 5 H(+)(out). Produces ATP from ADP in the presence of a proton gradient across the membrane. The catalytic sites are hosted primarily by the beta subunits. This is ATP synthase subunit beta from Bartonella henselae (strain ATCC 49882 / DSM 28221 / CCUG 30454 / Houston 1) (Rochalimaea henselae).